Here is a 449-residue protein sequence, read N- to C-terminus: Glutamyl-tRNA reductase (449 aa).

Residues 48–51 (TCNR), Ser-99, 104–106 (EDQ), and Gln-110 contribute to the substrate site. Cys-49 acts as the Nucleophile in catalysis. 179–184 (GAGEIG) contacts NADP(+).

It belongs to the glutamyl-tRNA reductase family. Homodimer.

The enzyme catalyses (S)-4-amino-5-oxopentanoate + tRNA(Glu) + NADP(+) = L-glutamyl-tRNA(Glu) + NADPH + H(+). It functions in the pathway porphyrin-containing compound metabolism; protoporphyrin-IX biosynthesis; 5-aminolevulinate from L-glutamyl-tRNA(Glu): step 1/2. Functionally, catalyzes the NADPH-dependent reduction of glutamyl-tRNA(Glu) to glutamate 1-semialdehyde (GSA). This is Glutamyl-tRNA reductase from Methanosarcina barkeri (strain Fusaro / DSM 804).